The chain runs to 340 residues: Ras association domain-containing protein 1 (340 aa).

Residue Ser-2 is modified to N-acetylserine. Ser-2 carries the phosphoserine modification. The tract at residues 2–115 is mediates interaction with E4F1; it reads SAEPELIELR…DLGWDSALER (114 aa). The Phorbol-ester/DAG-type zinc finger occupies 51 to 101; it reads GHRFQPAGPTTHTWCDLCGDFIWGVVRKGLQCAHCKFTCHYRCRALVCLDC. Over residues 175-185 the composition is skewed to low complexity; that stretch reads SVPSSKKPPSL. The interval 175–196 is disordered; it reads SVPSSKKPPSLQDARRGTGRST. One can recognise a Ras-associating domain in the interval 194-288; that stretch reads RSTAVKRRTS…LSFVLKENDS (95 aa). Positions 290-337 constitute an SARAH domain; sequence EVNWDAFSMPELHNFLRILQREEEEHLRQILQKYSRCRQKIQEALHAC. Positions 311 to 314 are MOAP1-binding; it reads EEEE.

In terms of assembly, interacts with MAP1S and XPA. Binds to the N-terminal of CDC20 during prometaphase. Binds to STK3/MST2 and STK4/MST1. Recruited to the TNFRSF1A and TNFRSF10A complexes in response to their respective cognate ligand, after internalization. Can self-associate. Part of a complex with MDM2, DAXX, RASSF1 and USP7. Interacts with MOAP1 and E4F1. Interacts with RSSF5 and probably associates with HRAS via a RSSF1 isoform A-RSSF5 heterodimer. Interacts (via C-terminus) with DAXX (via N-terminus); the interaction is independent of MDM2 and TP53. Interacts (via N-terminus) with MDM2 (via C-terminus); the interaction is independent of TP53. Interacts with RAB39A. Interacts with RAB39B; the interaction is weak. As to quaternary structure, interacts with ECM2. Interacts with RAB39B; the interaction is strong. Does not interact with RAB39A.

The protein localises to the cytoplasm. Its subcellular location is the cytoskeleton. It localises to the microtubule organizing center. The protein resides in the centrosome. It is found in the spindle. The protein localises to the spindle pole. Its subcellular location is the nucleus. In terms of biological role, potential tumor suppressor. Required for death receptor-dependent apoptosis. Mediates activation of Mediates activation of STK3/MST2 and STK4/MST1 during Fas-induced apoptosis by preventing their dephosphorylation. When associated with MOAP1, promotes BAX conformational change and translocation to mitochondrial membranes in response to TNF and TNFSF10 stimulation. Isoform A interacts with CDC20, an activator of the anaphase-promoting complex, APC, resulting in the inhibition of APC activity and mitotic progression. Inhibits proliferation by negatively regulating cell cycle progression at the level of G1/S-phase transition by regulating accumulation of cyclin D1 protein. Isoform C has been shown not to perform these roles, no function has been identified for this isoform. Isoform A disrupts interactions among MDM2, DAXX and USP7, thus contributing to the efficient activation of TP53 by promoting MDM2 self-ubiquitination in cell-cycle checkpoint control in response to DNA damage. The protein is Ras association domain-containing protein 1 of Mus musculus (Mouse).